We begin with the raw amino-acid sequence, 292 residues long: MLFLGSHVAMKKPHNFQGSIQTAISYGANALMVYSGAPQNTIRSKTEELKIKEALKIAQNNNLSLNNLVGHAPYIINLANPDKTKRAFAIDFLSQELERFAAMKINKMVLHPGNYLKTNPQEGISLIAQSLDLIFAKTKHLKTQISLETMAGKGTEIGKRLEELQQIRTLVKNKTRVSFCLDTCHLFDAGYDLKENLEEIIQKIDSILGFQNVSVIHINDSKNECNSHKDRHENIGFGKIGFETLLKIIYHRAFVCIPKILETPYINEKEPYKHEIEMIKTKNFNPELKNLF.

Residues H71, H111, E148, D182, H185, H217, D230, H232, and E262 each contribute to the Zn(2+) site.

It belongs to the AP endonuclease 2 family. Zn(2+) is required as a cofactor.

It carries out the reaction Endonucleolytic cleavage to 5'-phosphooligonucleotide end-products.. In terms of biological role, endonuclease IV plays a role in DNA repair. It cleaves phosphodiester bonds at apurinic or apyrimidinic (AP) sites, generating a 3'-hydroxyl group and a 5'-terminal sugar phosphate. The protein is Probable endonuclease 4 of Aster yellows witches'-broom phytoplasma (strain AYWB).